The sequence spans 147 residues: D-aminoacyl-tRNA deacylase (147 aa).

Positions 136–137 (GP) match the Gly-cisPro motif, important for rejection of L-amino acids motif.

The protein belongs to the DTD family. As to quaternary structure, homodimer.

It localises to the cytoplasm. It carries out the reaction glycyl-tRNA(Ala) + H2O = tRNA(Ala) + glycine + H(+). It catalyses the reaction a D-aminoacyl-tRNA + H2O = a tRNA + a D-alpha-amino acid + H(+). In terms of biological role, an aminoacyl-tRNA editing enzyme that deacylates mischarged D-aminoacyl-tRNAs. Also deacylates mischarged glycyl-tRNA(Ala), protecting cells against glycine mischarging by AlaRS. Acts via tRNA-based rather than protein-based catalysis; rejects L-amino acids rather than detecting D-amino acids in the active site. By recycling D-aminoacyl-tRNA to D-amino acids and free tRNA molecules, this enzyme counteracts the toxicity associated with the formation of D-aminoacyl-tRNA entities in vivo and helps enforce protein L-homochirality. The chain is D-aminoacyl-tRNA deacylase from Streptococcus pneumoniae (strain P1031).